Here is a 503-residue protein sequence, read N- to C-terminus: MTEMVISPAERQSIRRLPFSFANRFKLVLDWNEDFSQASIYYLAPLSMEALVETKRVVKHAFQLIELSQAEFESKLTQVYQRDSSEARQLMEDIGADSDDFFSLAEELPQNEDLLESEDDAPIIKLINAMLGEAIKEGASDIHIETFEKTLSIRFRVDGVLREVLAPSRKLSSLLVSRVKVMAKLDIAEKRVPQDGRISLRIGGRAVDVRVSTMPSSHGERVVMRLLDKNATRLDLHSLGMTAHNHDNFRRLIKRPHGIILVTGPTGSGKSTTLYAGLQELNSSERNILTVEDPIEFDIDGIGQTQVNPRVDMTFARGLRAILRQDPDVVMVGEIRDLETAQIAVQASLTGHLVMSTLHTNTAVGAVTRLRDMGIEPFLISSSLLGVLAQRLVRTLCPDCKEPYEADKEQRKLFDSKKKEPLILYRATGCPKCNHKGYRGRTGIHELLLVDDALQELIHSEAGEQAMEKHIRATTPSIRDDGLDKVRQGITSLEEVMRVTKES.

The Zn(2+) site is built by cysteine 397, cysteine 400, cysteine 430, and cysteine 433.

It belongs to the GSP E family. Forms homooligomers; most probably hexamers. Interacts with EpsL/GspL. It depends on Zn(2+) as a cofactor.

The protein resides in the cell inner membrane. It catalyses the reaction ATP + H2O + cellular proteinSide 1 = ADP + phosphate + cellular proteinSide 2.. ATPase component of the type II secretion system required for the energy-dependent secretion of extracellular factors such as proteases and toxins from the periplasm. Acts as a molecular motor to provide the energy that is required for assembly of the pseudopilus and the extrusion of substrates generated in the cytoplasm. This is Type II secretion system ATPase E (epsE) from Vibrio cholerae serotype O1 (strain ATCC 39315 / El Tor Inaba N16961).